Consider the following 377-residue polypeptide: Anhydro-N-acetylmuramic acid kinase (377 aa).

Residue 19–26 (GTSLDGVD) participates in ATP binding.

The protein belongs to the anhydro-N-acetylmuramic acid kinase family.

It carries out the reaction 1,6-anhydro-N-acetyl-beta-muramate + ATP + H2O = N-acetyl-D-muramate 6-phosphate + ADP + H(+). It participates in amino-sugar metabolism; 1,6-anhydro-N-acetylmuramate degradation. The protein operates within cell wall biogenesis; peptidoglycan recycling. Functionally, catalyzes the specific phosphorylation of 1,6-anhydro-N-acetylmuramic acid (anhMurNAc) with the simultaneous cleavage of the 1,6-anhydro ring, generating MurNAc-6-P. Is required for the utilization of anhMurNAc either imported from the medium or derived from its own cell wall murein, and thus plays a role in cell wall recycling. The protein is Anhydro-N-acetylmuramic acid kinase of Roseobacter denitrificans (strain ATCC 33942 / OCh 114) (Erythrobacter sp. (strain OCh 114)).